The sequence spans 131 residues: Small ribosomal subunit protein uS8 (131 aa).

It belongs to the universal ribosomal protein uS8 family. In terms of assembly, part of the 30S ribosomal subunit. Contacts proteins S5 and S12.

Functionally, one of the primary rRNA binding proteins, it binds directly to 16S rRNA central domain where it helps coordinate assembly of the platform of the 30S subunit. In Campylobacter jejuni subsp. jejuni serotype O:23/36 (strain 81-176), this protein is Small ribosomal subunit protein uS8.